The chain runs to 68 residues: Protein SlyX homolog (68 aa).

It belongs to the SlyX family.

This Pseudomonas putida (strain ATCC 700007 / DSM 6899 / JCM 31910 / BCRC 17059 / LMG 24140 / F1) protein is Protein SlyX homolog.